The chain runs to 132 residues: Small ribosomal subunit protein uS8 (132 aa).

The protein belongs to the universal ribosomal protein uS8 family. Part of the 30S ribosomal subunit. Contacts proteins S5 and S12.

One of the primary rRNA binding proteins, it binds directly to 16S rRNA central domain where it helps coordinate assembly of the platform of the 30S subunit. The polypeptide is Small ribosomal subunit protein uS8 (Staphylococcus carnosus (strain TM300)).